A 270-amino-acid polypeptide reads, in one-letter code: Chlorophyll a-b binding protein, chloroplastic (270 aa).

The transit peptide at 1 to 41 (MASACASSTIAAVAFSSPSSQKNGSIVGATKASFLGGKRLR) directs the protein to the chloroplast. Chlorophyll b is bound at residue tryptophan 68. Chlorophyll a-binding residues include phenylalanine 88, glutamate 107, and histidine 110. Arginine 112 serves as a coordination point for chlorophyll b. A helical membrane pass occupies residues 113-133 (WAMLGAAGIFIPEFLTKIGVL). Glutamine 144 is a binding site for chlorophyll a. Residues 146 to 166 (YFTDTTTLFVIELVLIGWAEG) traverse the membrane as a helical segment. 3 residues coordinate chlorophyll b: valine 155, glutamate 165, and arginine 168. Chlorophyll a contacts are provided by lysine 221, glutamate 222, asparagine 225, arginine 227, glutamine 239, and histidine 254. The chain crosses the membrane as a helical span at residues 228–248 (LAMLAVMGAWFQHIYTGTGPI).

It belongs to the light-harvesting chlorophyll a/b-binding (LHC) protein family. In terms of assembly, the LHC complex consists of chlorophyll a-b binding proteins. The cofactor is Binds at least 14 chlorophylls (8 Chl-a and 6 Chl-b) and carotenoids such as lutein and neoxanthin.. Post-translationally, photoregulated by reversible phosphorylation of its threonine residues.

It is found in the plastid. It localises to the chloroplast thylakoid membrane. Its function is as follows. The light-harvesting complex (LHC) functions as a light receptor, it captures and delivers excitation energy to photosystems with which it is closely associated. This chain is Chlorophyll a-b binding protein, chloroplastic, found in Petunia hybrida (Petunia).